A 338-amino-acid polypeptide reads, in one-letter code: Ferredoxin--NADP reductase (338 aa).

Asp-32, Gln-40, Tyr-45, Val-85, Phe-120, Asp-287, and Thr-327 together coordinate FAD.

The protein belongs to the ferredoxin--NADP reductase type 2 family. As to quaternary structure, homodimer. FAD serves as cofactor.

The enzyme catalyses 2 reduced [2Fe-2S]-[ferredoxin] + NADP(+) + H(+) = 2 oxidized [2Fe-2S]-[ferredoxin] + NADPH. This chain is Ferredoxin--NADP reductase, found in Wolbachia pipientis wMel.